Here is a 172-residue protein sequence, read N- to C-terminus: Shikimate kinase (172 aa).

11–16 (GSGKTT) contacts ATP. Thr-15 contacts Mg(2+). Substrate-binding residues include Asp-33, Arg-57, and Gly-79. Arg-117 is a binding site for ATP. Arg-136 lines the substrate pocket.

It belongs to the shikimate kinase family. Monomer. Requires Mg(2+) as cofactor.

The protein resides in the cytoplasm. The enzyme catalyses shikimate + ATP = 3-phosphoshikimate + ADP + H(+). It functions in the pathway metabolic intermediate biosynthesis; chorismate biosynthesis; chorismate from D-erythrose 4-phosphate and phosphoenolpyruvate: step 5/7. Functionally, catalyzes the specific phosphorylation of the 3-hydroxyl group of shikimic acid using ATP as a cosubstrate. This chain is Shikimate kinase, found in Caldicellulosiruptor bescii (strain ATCC BAA-1888 / DSM 6725 / KCTC 15123 / Z-1320) (Anaerocellum thermophilum).